A 310-amino-acid chain; its full sequence is Upstream stimulatory factor 1 (310 aa).

The segment covering 1 to 17 (MKGQQKTAETEEGTVQI) has biased composition (polar residues). Disordered stretches follow at residues 1-26 (MKGQ…ATGE) and 171-209 (QGGS…EVER). Basic and acidic residues predominate over residues 194 to 209 (TTRDEKRRAQHNEVER). Positions 199 to 254 (KRRAQHNEVERRRRDKINNWIVQLSKIIPDCSMESTKSGQSKGGILSKACDYIQEL) constitute a bHLH domain. The tract at residues 271 to 292 (LQLDNDVLRQQVEDLKNKNLLL) is leucine-zipper. Lys-306 is covalently cross-linked (Glycyl lysine isopeptide (Lys-Gly) (interchain with G-Cter in SUMO2)).

Efficient DNA binding requires dimerization with another bHLH protein. Binds DNA as a homodimer or a heterodimer (USF1/USF2).

It is found in the nucleus. Its function is as follows. Transcription factor that binds to a symmetrical DNA sequence (E-boxes) (5'-CACGTG-3') that is found in a variety of viral and cellular promoters. Regulates the expression of the surfactant protein-A (SP-A) gene. The polypeptide is Upstream stimulatory factor 1 (USF1) (Oryctolagus cuniculus (Rabbit)).